A 303-amino-acid polypeptide reads, in one-letter code: N-acetylmuramic acid 6-phosphate etherase (303 aa).

A disordered region spans residues 1-21; it reads MQPSQLRSLTTESRNPNTMGI. Residues 58–221 enclose the SIS domain; it reads AYDSISNGGR…STSVMIRQGK (164 aa). The active-site Proton donor is the glutamate 86. The active site involves glutamate 117.

The protein belongs to the GCKR-like family. MurNAc-6-P etherase subfamily. Homodimer.

It carries out the reaction N-acetyl-D-muramate 6-phosphate + H2O = N-acetyl-D-glucosamine 6-phosphate + (R)-lactate. It participates in amino-sugar metabolism; N-acetylmuramate degradation. Functionally, specifically catalyzes the cleavage of the D-lactyl ether substituent of MurNAc 6-phosphate, producing GlcNAc 6-phosphate and D-lactate. This chain is N-acetylmuramic acid 6-phosphate etherase, found in Bacillus pumilus (strain SAFR-032).